Reading from the N-terminus, the 591-residue chain is L-fucose isomerase (591 aa).

Residues Glu-337 and Asp-361 each act as proton acceptor in the active site. Residues Glu-337, Asp-361, and His-528 each contribute to the Mn(2+) site.

It belongs to the L-fucose isomerase family. Homohexamer. Mn(2+) serves as cofactor.

It localises to the cytoplasm. The catalysed reaction is L-fucose = L-fuculose. It participates in carbohydrate degradation; L-fucose degradation; L-lactaldehyde and glycerone phosphate from L-fucose: step 1/3. Functionally, converts the aldose L-fucose into the corresponding ketose L-fuculose. The sequence is that of L-fucose isomerase from Salmonella paratyphi B (strain ATCC BAA-1250 / SPB7).